We begin with the raw amino-acid sequence, 118 residues long: CLAVATA3/ESR (CLE)-related protein 12 (118 aa).

Residues 1–35 (MLRISSSSSMALKFSQILFIVLWLSLFFLLLHHLY) form the signal peptide. Composition is skewed to basic and acidic residues over residues 75-91 (TPFH…RSGE) and 98-108 (IDPRYGVEKRR). Positions 75 to 118 (TPFHSRDNSRHNHRSGEQYDGDEIDPRYGVEKRRVPSGPNPLHH) are disordered. Hydroxyproline occurs at positions 110 and 113. Pro-113 carries O-linked (Ara...) hydroxyproline glycosylation.

The protein belongs to the CLV3/ESR signal peptide family. In terms of processing, the O-glycosylation (arabinosylation) of the hydroxyproline Pro-113 enhances binding affinity of the CLE12p peptide for its receptor. As to expression, mostly expressed in seedlings, roots, flowers, stems and apex, and, to a lower extent, in leaves and siliques.

The protein resides in the secreted. Its subcellular location is the extracellular space. In terms of biological role, extracellular signal peptide that regulates cell fate. Represses root apical meristem maintenance. The protein is CLAVATA3/ESR (CLE)-related protein 12 of Arabidopsis thaliana (Mouse-ear cress).